A 384-amino-acid chain; its full sequence is MKKLTILGSTGSIGTSTLEIVAAHPDRFQVIALTAGSNLELLKQQVEVFRPRLVSVLTADLARQLDRMLSDPKPEIHHGIPGLIAAATAGEADVVVAAIVGAAGLVPTAAAIKAGKDVALANKETLVTAGRIMMDLVRENGVRLYPVDSEHSAVFQSLEGQSGKDVKRIILTASGGPFLNLPLDRLSRVSVADALNHPNWSMGQKITIDSATMMNKGLEVIEARWLFDTPAERIAVNIHPQSIIHSMVEYVDGCVMAQLGVPDMKAPIAYALTYPERIPTGVKPLDLTALSGLTFLAPDYQRFPALKLAYDALAAGESMPAVMNAANEVAVEAFLKGKIGFTGIATSIARTMDAHEPHTLATIEDVLSSDLWAREKSRELIGLS.

NADPH is bound by residues Thr-10, Gly-11, Ser-12, Ile-13, Gly-36, Asn-38, and Asn-122. Lys-123 is a 1-deoxy-D-xylulose 5-phosphate binding site. NADPH is bound at residue Glu-124. Asp-148 provides a ligand contact to Mn(2+). 1-deoxy-D-xylulose 5-phosphate contacts are provided by Ser-149, Glu-150, Ser-174, and His-197. Residue Glu-150 participates in Mn(2+) binding. Gly-203 contributes to the NADPH binding site. Ser-210, Asn-215, Lys-216, and Glu-219 together coordinate 1-deoxy-D-xylulose 5-phosphate. Glu-219 contributes to the Mn(2+) binding site.

The protein belongs to the DXR family. Mg(2+) is required as a cofactor. The cofactor is Mn(2+).

It carries out the reaction 2-C-methyl-D-erythritol 4-phosphate + NADP(+) = 1-deoxy-D-xylulose 5-phosphate + NADPH + H(+). The protein operates within isoprenoid biosynthesis; isopentenyl diphosphate biosynthesis via DXP pathway; isopentenyl diphosphate from 1-deoxy-D-xylulose 5-phosphate: step 1/6. In terms of biological role, catalyzes the NADPH-dependent rearrangement and reduction of 1-deoxy-D-xylulose-5-phosphate (DXP) to 2-C-methyl-D-erythritol 4-phosphate (MEP). This Geobacter metallireducens (strain ATCC 53774 / DSM 7210 / GS-15) protein is 1-deoxy-D-xylulose 5-phosphate reductoisomerase.